Here is a 103-residue protein sequence, read N- to C-terminus: Large ribosomal subunit protein bL21 (103 aa).

Belongs to the bacterial ribosomal protein bL21 family. In terms of assembly, part of the 50S ribosomal subunit. Contacts protein L20.

In terms of biological role, this protein binds to 23S rRNA in the presence of protein L20. The polypeptide is Large ribosomal subunit protein bL21 (Vibrio atlanticus (strain LGP32) (Vibrio splendidus (strain Mel32))).